Here is a 376-residue protein sequence, read N- to C-terminus: Fibromodulin (376 aa).

A signal peptide spans 1–18 (MQWASILLLAGLCSLSWA). The residue at position 19 (Q19) is a Pyrrolidone carboxylic acid. A sulfotyrosine mark is found at Y20, Y38, Y45, Y47, Y50, Y53, Y55, Y63, and Y65. Positions 67–105 (SPPQPEPRDCPQECDCPPNFPTAMYCDNRNLKYLPFVPS) constitute an LRRNT domain. LRR repeat units lie at residues 106 to 127 (RMKY…VFDN), 130 to 151 (GLLW…KKVF), 156 to 176 (HLER…PLPR), 177 to 198 (SLRE…ALEG), 201 to 222 (NLTA…MKGL), 224 to 245 (SLIL…LPSA), 246 to 266 (LEQL…YFRG), and 269 to 289 (KLLY…ASNT). N-linked (GlcNAc...) (keratan sulfate) asparagine glycosylation occurs at N127. Residue N166 is glycosylated (N-linked (GlcNAc...) (keratan sulfate) asparagine). Residue N201 is glycosylated (N-linked (GlcNAc...) (keratan sulfate) asparagine). A glycan (N-linked (GlcNAc...) (keratan sulfate) asparagine) is linked at N291. LRR repeat units follow at residues 294-315 (SLLE…STNL) and 316-335 (ENLY…SFCT). A disulfide bridge connects residues C334 and C367. N341 carries an N-linked (GlcNAc...) asparagine glycan. Residues 344-365 (KLQVLRLDGNEIKRSAMPADAP) form an LRR 11 repeat.

It belongs to the small leucine-rich proteoglycan (SLRP) family. SLRP class II subfamily. As to quaternary structure, binds to type I and type II collagen. Post-translationally, binds keratan sulfate chains.

It is found in the secreted. Its subcellular location is the extracellular space. The protein resides in the extracellular matrix. In terms of biological role, affects the rate of fibrils formation. May have a primary role in collagen fibrillogenesis. In Bos taurus (Bovine), this protein is Fibromodulin (FMOD).